The sequence spans 90 residues: Probable Fe(2+)-trafficking protein (90 aa).

Belongs to the Fe(2+)-trafficking protein family.

Could be a mediator in iron transactions between iron acquisition and iron-requiring processes, such as synthesis and/or repair of Fe-S clusters in biosynthetic enzymes. This chain is Probable Fe(2+)-trafficking protein, found in Pseudomonas fluorescens (strain Pf0-1).